The following is a 347-amino-acid chain: Uroporphyrinogen decarboxylase (347 aa).

Substrate contacts are provided by residues 24 to 28 (RQAGR), Phe-42, Asp-73, Tyr-150, Thr-205, and His-320.

The protein belongs to the uroporphyrinogen decarboxylase family. As to quaternary structure, homodimer.

It localises to the cytoplasm. The catalysed reaction is uroporphyrinogen III + 4 H(+) = coproporphyrinogen III + 4 CO2. It participates in porphyrin-containing compound metabolism; protoporphyrin-IX biosynthesis; coproporphyrinogen-III from 5-aminolevulinate: step 4/4. Catalyzes the decarboxylation of four acetate groups of uroporphyrinogen-III to yield coproporphyrinogen-III. The chain is Uroporphyrinogen decarboxylase from Gloeobacter violaceus (strain ATCC 29082 / PCC 7421).